The following is a 636-amino-acid chain: MTNALLSIAVLLFSMLSLAQAETHTFNWTTGWDYRNVDGLKSRPVITCNGQFPWPDITVNKGDRVQIYLTNGMNNTNTSMHFHGLFQNGTASMDGVPFLTQCPIAPGSTMLYNFTVDYNVGTYWYHSHTDGQYEDGMKGLFIIKDDSFPYDYDEELSLSLSEWYHDLVTDLTKSFMSVYNPTGAEPIPQNLIVNNTMNLTWEVQPDTTYLLRIVNVGGFVSQYFWIEDHEMTVVEIDGITTEKNVTDMLYITVAQRYTVLVHTKNDTDKNFAIMQKFDDTMLDVIPSDLQLNATSYMVYNKTAALPTQNYVDSIDNFLDDFYLQPYEKEAIYGEPDHVITVDVVMDNLKNGVNYAFFNNITYTAPKVPTLMTVLSSGDQANNSEIYGSNTHTFILEKDEIVEIVLNNQDTGTHPFHLHGHAFQTIQRDRTYDDALGEVPHSFDPDNHPAFPEYPMRRDTLYVRPQSNFVIRFKADNPGVWFFHCHIEWHLLQGLGLVLVEDPFGIQDAHSQQLSENHLEVCQSCSVATEGNAAANTLDLTDLTGENVQHAFIPTGFTKKGIIAMTFSCFAGILGIITIAIYGMMDMEDATEKVIRDLHVDPEVLLNEVDENEERQVNEDRHSTEKHQFLTKAKRFF.

The signal sequence occupies residues 1-21 (MTNALLSIAVLLFSMLSLAQA). The Extracellular segment spans residues 22 to 559 (ETHTFNWTTG…AFIPTGFTKK (538 aa)). N-linked (GlcNAc...) asparagine glycans are attached at residues Asn-27, Asn-74, and Asn-77. Plastocyanin-like domains are found at residues 32–146 (WDYR…IKDD) and 157–301 (SLSL…VYNK). Positions 81 and 83 each coordinate Cu cation. 2 N-linked (GlcNAc...) asparagine glycosylation sites follow: Asn-88 and Asn-113. The Cu cation site is built by His-126 and His-128. N-linked (GlcNAc...) asparagine glycans are attached at residues Asn-194, Asn-198, Asn-244, Asn-265, Asn-292, Asn-300, Asn-359, and Asn-381. One can recognise a Plastocyanin-like 3 domain in the interval 362 to 502 (YTAPKVPTLM…GLGLVLVEDP (141 aa)). Cu cation is bound by residues His-413, His-416, His-418, His-483, Cys-484, His-485, and His-489. A helical transmembrane segment spans residues 560-584 (GIIAMTFSCFAGILGIITIAIYGMM). Over 585-636 (DMEDATEKVIRDLHVDPEVLLNEVDENEERQVNEDRHSTEKHQFLTKAKRFF) the chain is Cytoplasmic.

This sequence belongs to the multicopper oxidase family. Requires Cu cation as cofactor.

The protein localises to the cell membrane. It carries out the reaction 4 Fe(2+) + O2 + 4 H(+) = 4 Fe(3+) + 2 H2O. The catalysed reaction is 4 Cu(+) + O2 + 4 H(+) = 4 Cu(2+) + 2 H2O. In terms of biological role, iron transport multicopper ferroxidase required for Fe(2+) ion high affinity uptake. Required to oxidize Fe(2+) to Fe(3+), which is then transported into the cell via the ferric iron permease FTR1. Essential component of copper-dependent iron transport. Also has cuprous oxidase activity. This chain is Iron transport multicopper oxidase FET3 (FET3), found in Saccharomyces cerevisiae (strain ATCC 204508 / S288c) (Baker's yeast).